Reading from the N-terminus, the 94-residue chain is Co-chaperonin GroES (94 aa).

Belongs to the GroES chaperonin family. Heptamer of 7 subunits arranged in a ring. Interacts with the chaperonin GroEL.

The protein resides in the cytoplasm. In terms of biological role, together with the chaperonin GroEL, plays an essential role in assisting protein folding. The GroEL-GroES system forms a nano-cage that allows encapsulation of the non-native substrate proteins and provides a physical environment optimized to promote and accelerate protein folding. GroES binds to the apical surface of the GroEL ring, thereby capping the opening of the GroEL channel. This is Co-chaperonin GroES from Clostridium perfringens (strain SM101 / Type A).